A 175-amino-acid polypeptide reads, in one-letter code: Shikimate kinase (175 aa).

Residue 14–19 (GAGKST) coordinates ATP. A Mg(2+)-binding site is contributed by serine 18. Residues aspartate 36, arginine 60, and glycine 82 each contribute to the substrate site. An ATP-binding site is contributed by arginine 120. Arginine 140 contributes to the substrate binding site. Glutamine 157 provides a ligand contact to ATP.

This sequence belongs to the shikimate kinase family. Monomer. The cofactor is Mg(2+).

The protein localises to the cytoplasm. The catalysed reaction is shikimate + ATP = 3-phosphoshikimate + ADP + H(+). It functions in the pathway metabolic intermediate biosynthesis; chorismate biosynthesis; chorismate from D-erythrose 4-phosphate and phosphoenolpyruvate: step 5/7. Catalyzes the specific phosphorylation of the 3-hydroxyl group of shikimic acid using ATP as a cosubstrate. The protein is Shikimate kinase of Histophilus somni (strain 2336) (Haemophilus somnus).